Here is a 127-residue protein sequence, read N- to C-terminus: Fluoride-specific ion channel FluC (127 aa).

Transmembrane regions (helical) follow at residues 4–24 (LDYL…YLVS), 39–59 (GTII…FAAI), 68–88 (AILF…TFTY), and 102–122 (VAYA…GMIL). The Na(+) site is built by G78 and T81.

It belongs to the fluoride channel Fluc/FEX (TC 1.A.43) family.

It is found in the cell inner membrane. The catalysed reaction is fluoride(in) = fluoride(out). Its activity is regulated as follows. Na(+) is not transported, but it plays an essential structural role and its presence is essential for fluoride channel function. Its function is as follows. Fluoride-specific ion channel. Important for reducing fluoride concentration in the cell, thus reducing its toxicity. The sequence is that of Fluoride-specific ion channel FluC from Thermotoga petrophila (strain ATCC BAA-488 / DSM 13995 / JCM 10881 / RKU-1).